Reading from the N-terminus, the 749-residue chain is Catalase-peroxidase 2 (749 aa).

Residues 1-27 (MFKRTIPLFAAFTLAISPSIFPNYAHA) form the signal peptide. The tryptophyl-tyrosyl-methioninium (Trp-Tyr) (with M-255) cross-link spans 107–229 (WHAAGTYRIY…LAATVMGLIY (123 aa)). Residue His-108 is the Proton acceptor of the active site. The tryptophyl-tyrosyl-methioninium (Tyr-Met) (with W-107) cross-link spans 229-255 (YVNPEGPNGVPDPLAAAEKIRETFGRM). His-270 is a binding site for heme b.

Belongs to the peroxidase family. Peroxidase/catalase subfamily. As to quaternary structure, homodimer or homotetramer. Heme b is required as a cofactor. In terms of processing, formation of the three residue Trp-Tyr-Met cross-link is important for the catalase, but not the peroxidase activity of the enzyme.

It carries out the reaction H2O2 + AH2 = A + 2 H2O. The catalysed reaction is 2 H2O2 = O2 + 2 H2O. Bifunctional enzyme with both catalase and broad-spectrum peroxidase activity. This Legionella pneumophila subsp. pneumophila (strain Philadelphia 1 / ATCC 33152 / DSM 7513) protein is Catalase-peroxidase 2.